Reading from the N-terminus, the 297-residue chain is Glucose-6-phosphate 1-epimerase (297 aa).

R57, Q81, and R86 together coordinate substrate. S88 carries the post-translational modification Phosphoserine. The active site involves H159. D203 lines the substrate pocket. E264 is an active-site residue.

The protein belongs to the glucose-6-phosphate 1-epimerase family.

It carries out the reaction alpha-D-glucose 6-phosphate = beta-D-glucose 6-phosphate. In terms of biological role, catalyzes the interconversion between the alpha and beta anomers from at least three hexose 6-phosphate sugars (Glc6P, Gal6P, and Man6P). In Saccharomyces cerevisiae (strain ATCC 204508 / S288c) (Baker's yeast), this protein is Glucose-6-phosphate 1-epimerase.